Here is a 709-residue protein sequence, read N- to C-terminus: RxLR effector protein PITG_15110 (709 aa).

A signal peptide spans 1-18; it reads MHAYSAAVLMGLLMVAEG. The RxLR-dEER signature appears at 51 to 66; it reads RLLREPETTEASNEDR.

This sequence belongs to the RxLR effector family.

Its subcellular location is the secreted. The protein resides in the host cytoplasm. It is found in the host cytoskeleton. Effector that enhances P.infestans colonization of Nicotiana benthamiana leaves. The polypeptide is RxLR effector protein PITG_15110 (Phytophthora infestans (strain T30-4) (Potato late blight agent)).